The primary structure comprises 326 residues: Peroxidase 46 (326 aa).

A signal peptide spans 1 to 27; the sequence is MASSYRINCSTLLHLLMFLSSLLTSSA. N28 carries an N-linked (GlcNAc...) asparagine glycan. 4 disulfides stabilise this stretch: C38-C114, C71-C76, C120-C322, and C199-C233. H69 serves as the catalytic Proton acceptor. D70, V73, G75, D77, and S79 together coordinate Ca(2+). N85 carries an N-linked (GlcNAc...) asparagine glycan. H192 is a binding site for heme b. T193 contacts Ca(2+). Ca(2+) is bound by residues D246, T249, and D254. N278 carries an N-linked (GlcNAc...) asparagine glycan.

It belongs to the peroxidase family. Classical plant (class III) peroxidase subfamily. It depends on heme b as a cofactor. The cofactor is Ca(2+).

The protein resides in the secreted. It catalyses the reaction 2 a phenolic donor + H2O2 = 2 a phenolic radical donor + 2 H2O. Its function is as follows. Removal of H(2)O(2), oxidation of toxic reductants, biosynthesis and degradation of lignin, suberization, auxin catabolism, response to environmental stresses such as wounding, pathogen attack and oxidative stress. These functions might be dependent on each isozyme/isoform in each plant tissue. In Arabidopsis thaliana (Mouse-ear cress), this protein is Peroxidase 46 (PER46).